The following is a 129-amino-acid chain: Trefoil factor 2 (129 aa).

An N-terminal signal peptide occupies residues 1 to 23; sequence MGPRGAPLLVVVLVLGLHALAEG. P-type domains are found at residues 29–73 and 79–122; these read CRCS…FHPL and EQCV…FFPQ. Disulfide bonds link Cys29/Cys127, Cys31/Cys58, Cys42/Cys57, Cys52/Cys69, Cys81/Cys107, Cys91/Cys106, and Cys101/Cys118.

As to expression, expressed in the digestive tract, where it was found predominantly in the stomach with highest expression in the antrum. It is secreted predominantly from antral mucous cells into the lumen of the gastrointestinal tract.

The protein localises to the secreted. Functionally, inhibits gastrointestinal motility and gastric acid secretion. Could function as a structural component of gastric mucus, possibly by stabilizing glycoproteins in the mucus gel through interactions with carbohydrate side chains. This Rattus norvegicus (Rat) protein is Trefoil factor 2 (Tff2).